The chain runs to 284 residues: Origin of replication complex subunit 6 (284 aa).

Belongs to the ORC6 family. Component of the origin recognition complex (ORC) composed of at least ORC1 (ORC1A or ORC1B), ORC2, ORC3, ORC4, ORC5 and ORC6. ORC is regulated in a cell-cycle and development dependent manner. It is sequentially assembled at the exit from anaphase of mitosis and disassembled as cells enter S phase. Interacts directly with ORC2, ORC3, ORC4 and ORC5. Follow a cell-cycle regulation with a peak at the G1/S-phase. Mostly expressed in siliques, flowers, flower buds and mature leaves, and, to a lower exent, in roots, leaves and stems.

The protein resides in the nucleus. In terms of biological role, component of the origin recognition complex (ORC) that binds origins of replication. DNA-binding is ATP-dependent. The specific DNA sequences that define origins of replication have not been identified yet. ORC is required to assemble the pre-replication complex necessary to initiate DNA replication. This is Origin of replication complex subunit 6 from Arabidopsis thaliana (Mouse-ear cress).